Reading from the N-terminus, the 328-residue chain is Pyruvate dehydrogenase E1 component subunit beta (328 aa).

Glu-60 lines the thiamine diphosphate pocket. Residues Ile-113, Ile-162, and Asn-166 each contribute to the K(+) site.

As to quaternary structure, heterodimer of an alpha and a beta chain. Thiamine diphosphate is required as a cofactor.

The protein resides in the plastid. It localises to the chloroplast. It carries out the reaction N(6)-[(R)-lipoyl]-L-lysyl-[protein] + pyruvate + H(+) = N(6)-[(R)-S(8)-acetyldihydrolipoyl]-L-lysyl-[protein] + CO2. The pyruvate dehydrogenase complex catalyzes the overall conversion of pyruvate to acetyl-CoA and CO(2). It contains multiple copies of three enzymatic components: pyruvate dehydrogenase (E1), dihydrolipoamide acetyltransferase (E2) and lipoamide dehydrogenase (E3). This chain is Pyruvate dehydrogenase E1 component subunit beta (pdhB), found in Staurastrum punctulatum (Green alga).